The following is a 509-amino-acid chain: MSKRNSTKNDIKLSDVGVAQWMDYQIILQEWKIGKLSSEIKNSIVKDMSSLSEFRGQSINANELESMIGDWSIYPITNKFKIIALWKIIENHRNKHNLGYILKSNVLEKTNKSKQNNNGFNGHKGNFSENEIRKTNNYRIIKKQKIEFEKNNKNTIITRKNNNNNNSNNNNNNNNNYNQKSNTTMDNNYSDDDYQNEQNEFEEEDYDSNDDENDSHDENENFNIIKPKTTNQLKRKVSSSFTNNNYHVNNNNNNNDNINNFNSNSNSNTSNNNNNNNSDNNINNNNNNNNNNNNNNNNNNNNNNNNNNNNNNINNNYINNNNNDSWNNQFQNQLMYCNNYQAQYQQLHPNHYQLQYQQQQQNINNNINANNNNNNNNNNNNNNNLNDSTPNNQTNNDLKSSNHSNYDFNYNTNERLSHSPIQTHSSSNNSTPSNQSPTFPSNYISQNANINYNPNQGSMFYPPQQFYVESMFYQQQLQQQQQQQQQIAQQPVSQQNNNVETNQDNVQQQ.

4 disordered regions span residues 112–131, 152–325, 365–457, and 488–509; these read KSKQ…SENE, NKNT…NNDS, NNIN…PNQG, and AQQP…VQQQ. Composition is skewed to low complexity over residues 116–127 and 153–184; these read NNNGFNGHKGNF and KNTI…SNTT. Over residues 189-217 the composition is skewed to acidic residues; the sequence is YSDDDYQNEQNEFEEEDYDSNDDENDSHD. Residues 228 to 242 are compositionally biased toward polar residues; sequence KTTNQLKRKVSSSFT. 2 stretches are compositionally biased toward low complexity: residues 243-325 and 365-397; these read NNNY…NNDS and NNIN…TNND. Residues 398–422 show a composition bias toward polar residues; sequence LKSSNHSNYDFNYNTNERLSHSPIQ. The segment covering 423 to 442 has biased composition (low complexity); it reads THSSSNNSTPSNQSPTFPSN. Polar residues-rich tracts occupy residues 443–457 and 496–509; these read YISQ…PNQG and NNNV…VQQQ.

This is an uncharacterized protein from Dictyostelium discoideum (Social amoeba).